We begin with the raw amino-acid sequence, 529 residues long: Peptide chain release factor 3 (529 aa).

Positions 11–280 (AKRRTFAIIS…GLVEWAPAPM (270 aa)) constitute a tr-type G domain. GTP contacts are provided by residues 20–27 (SHPDAGKT), 88–92 (DTPGH), and 142–145 (NKLD).

It belongs to the TRAFAC class translation factor GTPase superfamily. Classic translation factor GTPase family. PrfC subfamily.

The protein localises to the cytoplasm. Its function is as follows. Increases the formation of ribosomal termination complexes and stimulates activities of RF-1 and RF-2. It binds guanine nucleotides and has strong preference for UGA stop codons. It may interact directly with the ribosome. The stimulation of RF-1 and RF-2 is significantly reduced by GTP and GDP, but not by GMP. The chain is Peptide chain release factor 3 from Yersinia enterocolitica serotype O:8 / biotype 1B (strain NCTC 13174 / 8081).